The chain runs to 691 residues: DNA ligase (691 aa).

NAD(+)-binding positions include 36–40 (DAEYD), 85–86 (SL), and E118. Catalysis depends on K120, which acts as the N6-AMP-lysine intermediate. NAD(+) is bound by residues R141, E178, K295, and K319. The Zn(2+) site is built by C413, C416, C431, and C437. The BRCT domain maps to 595 to 684 (GRPQPLAGQT…ESASSEDAQP (90 aa)).

It belongs to the NAD-dependent DNA ligase family. LigA subfamily. It depends on Mg(2+) as a cofactor. Mn(2+) serves as cofactor.

It catalyses the reaction NAD(+) + (deoxyribonucleotide)n-3'-hydroxyl + 5'-phospho-(deoxyribonucleotide)m = (deoxyribonucleotide)n+m + AMP + beta-nicotinamide D-nucleotide.. Its function is as follows. DNA ligase that catalyzes the formation of phosphodiester linkages between 5'-phosphoryl and 3'-hydroxyl groups in double-stranded DNA using NAD as a coenzyme and as the energy source for the reaction. It is essential for DNA replication and repair of damaged DNA. The protein is DNA ligase of Chromohalobacter salexigens (strain ATCC BAA-138 / DSM 3043 / CIP 106854 / NCIMB 13768 / 1H11).